Consider the following 237-residue polypeptide: MTKLSVNINKVATLRNARGGNVPNVVKVALDCESFGADGITVHPRPDERHIRRSDVYDLRPLLRTEFNIEGYPSPEFIDLVLKVKPHQVTLVPDDPSQITSNSGWDTKVNFDFLTEVLDEFNGAGIRTSVFVAPDAEMIEYAAKAGADRVELYTEPYATAYPKDPAAAVAPFVEAAKAARRLGIGLNAGHDLSLLNLNYFYKNIPWLDEVSIGHALISDALYLGLERTIQEYKNCLR.

Residues Asn-7 and Arg-18 each coordinate 3-amino-2-oxopropyl phosphate. His-43 serves as the catalytic Proton acceptor. 1-deoxy-D-xylulose 5-phosphate-binding residues include Arg-45 and His-50. Glu-70 (proton acceptor) is an active-site residue. Thr-100 is a binding site for 1-deoxy-D-xylulose 5-phosphate. His-190 functions as the Proton donor in the catalytic mechanism. 3-amino-2-oxopropyl phosphate is bound by residues Asp-191 and 213–214; that span reads GH.

It belongs to the PNP synthase family. As to quaternary structure, homooctamer; tetramer of dimers.

The protein localises to the cytoplasm. It catalyses the reaction 3-amino-2-oxopropyl phosphate + 1-deoxy-D-xylulose 5-phosphate = pyridoxine 5'-phosphate + phosphate + 2 H2O + H(+). It functions in the pathway cofactor biosynthesis; pyridoxine 5'-phosphate biosynthesis; pyridoxine 5'-phosphate from D-erythrose 4-phosphate: step 5/5. Catalyzes the complicated ring closure reaction between the two acyclic compounds 1-deoxy-D-xylulose-5-phosphate (DXP) and 3-amino-2-oxopropyl phosphate (1-amino-acetone-3-phosphate or AAP) to form pyridoxine 5'-phosphate (PNP) and inorganic phosphate. The sequence is that of Pyridoxine 5'-phosphate synthase from Bacteroides fragilis (strain ATCC 25285 / DSM 2151 / CCUG 4856 / JCM 11019 / LMG 10263 / NCTC 9343 / Onslow / VPI 2553 / EN-2).